A 237-amino-acid polypeptide reads, in one-letter code: Ribose-5-phosphate isomerase A (237 aa).

Residues 33–36, 90–93, and 103–106 each bind substrate; these read TGST, DGAD, and KGGG. Residue E112 is the Proton acceptor of the active site. K130 lines the substrate pocket.

The protein belongs to the ribose 5-phosphate isomerase family. In terms of assembly, homodimer.

It carries out the reaction aldehydo-D-ribose 5-phosphate = D-ribulose 5-phosphate. The protein operates within carbohydrate degradation; pentose phosphate pathway; D-ribose 5-phosphate from D-ribulose 5-phosphate (non-oxidative stage): step 1/1. In terms of biological role, catalyzes the reversible conversion of ribose-5-phosphate to ribulose 5-phosphate. The polypeptide is Ribose-5-phosphate isomerase A (Gloeothece citriformis (strain PCC 7424) (Cyanothece sp. (strain PCC 7424))).